The following is a 462-amino-acid chain: Argininosuccinate lyase (462 aa).

The protein belongs to the lyase 1 family. Argininosuccinate lyase subfamily.

The protein localises to the cytoplasm. It catalyses the reaction 2-(N(omega)-L-arginino)succinate = fumarate + L-arginine. The protein operates within amino-acid biosynthesis; L-arginine biosynthesis; L-arginine from L-ornithine and carbamoyl phosphate: step 3/3. The protein is Argininosuccinate lyase of Chloroflexus aggregans (strain MD-66 / DSM 9485).